Consider the following 551-residue polypeptide: Probable 4-coumarate--CoA ligase 1 (551 aa).

ATP contacts are provided by Ser205, Ser206, Gly207, Thr208, Thr209, and Lys213. Tyr253 serves as a coordination point for (E)-4-coumaroyl-AMP. Lys274 serves as a coordination point for CoA. An SBD1 region spans residues 276 to 346 (EPVRFLELIQ…RFKGRLVIKQ (71 aa)). 4 residues coordinate (E)-4-coumaroyl-AMP: Ala323, Gln346, Gly347, and Thr351. Residues Gln346, Gly347, Thr351, Asp430, and Arg445 each coordinate ATP. The segment at 347–409 (GYGATELSPA…IKGPNVMLGY (63 aa)) is SBD2. (E)-4-coumaroyl-AMP-binding residues include Lys447 and Lys451. CoA contacts are provided by Lys453 and Gly454. Lys537 is an ATP binding site.

The protein belongs to the ATP-dependent AMP-binding enzyme family. The cofactor is Mg(2+).

The enzyme catalyses (E)-4-coumarate + ATP + CoA = (E)-4-coumaroyl-CoA + AMP + diphosphate. The catalysed reaction is (E)-4-coumarate + ATP + H(+) = (E)-4-coumaroyl-AMP + diphosphate. It catalyses the reaction (E)-4-coumaroyl-AMP + CoA = (E)-4-coumaroyl-CoA + AMP + H(+). Its pathway is phytoalexin biosynthesis; 3,4',5-trihydroxystilbene biosynthesis; 3,4',5-trihydroxystilbene from trans-4-coumarate: step 1/2. Functionally, carboxylate--CoA ligase that may use 4-coumarate as substrate. Follows a two-step reaction mechanism, wherein the carboxylate substrate first undergoes adenylation by ATP, followed by a thioesterification in the presence of CoA to yield the final CoA thioester. The chain is Probable 4-coumarate--CoA ligase 1 (4cl1) from Dictyostelium discoideum (Social amoeba).